The primary structure comprises 146 residues: Nitric oxide reductase subunit C (146 aa).

A helical; Signal-anchor membrane pass occupies residues 13 to 29 (IYFGGSVFFILLFLALT). Heme c is bound by residues C61, C64, and H65.

As to quaternary structure, heterodimer of cytochromes b (large subunit) and c (small subunit).

The protein localises to the cell membrane. In terms of biological role, component of the anaerobic respiratory chain that transforms nitrate to dinitrogen (denitrification). The sequence is that of Nitric oxide reductase subunit C (norC) from Pseudomonas aeruginosa (strain ATCC 15692 / DSM 22644 / CIP 104116 / JCM 14847 / LMG 12228 / 1C / PRS 101 / PAO1).